The following is a 624-amino-acid chain: (-)-beta-phellandrene synthase 1, chloroplastic (624 aa).

The transit peptide at 1–48 directs the protein to the chloroplast; the sequence is MAIVSSVPLASKSCLHKSLISSIHKLKPFCRTIPTLGMSRPGKYVMPS. Mg(2+) contacts are provided by Asp-375, Asp-379, and Asp-527. A DDXXD motif motif is present at residues 375–379; sequence DDMYD.

This sequence belongs to the terpene synthase family. Tpsd subfamily. Mg(2+) serves as cofactor. The cofactor is Mn(2+).

Its subcellular location is the plastid. The protein localises to the chloroplast. It catalyses the reaction (2E)-geranyl diphosphate = (-)-beta-phellandrene + diphosphate. It participates in terpene metabolism; oleoresin biosynthesis. Its function is as follows. Terpene synthase (TPS) involved in the biosynthesis of monoterpene natural products included in conifer oleoresin secretions and volatile emissions; these compounds contribute to biotic and abiotic stress defense against herbivores and pathogens. Catalyzes the conversion of (2E)-geranyl diphosphate (GPP) to (-)-beta-phellandrene. In Picea sitchensis (Sitka spruce), this protein is (-)-beta-phellandrene synthase 1, chloroplastic.